Here is a 362-residue protein sequence, read N- to C-terminus: Glutaminase-asparaginase (362 aa).

The signal sequence occupies residues 1 to 25 (MKPLLHAFAPGVMALMLLLPQAAQA). The region spanning 35-362 (SNVVILATGG…KELQRIFWEY (328 aa)) is the Asparaginase/glutaminase domain. Thr-45 functions as the Acyl-ester intermediate in the catalytic mechanism. Substrate contacts are provided by residues Ser-92 and 125-126 (TD).

This sequence belongs to the asparaginase 1 family. In terms of assembly, homotetramer.

It localises to the periplasm. It catalyses the reaction L-glutamine + H2O = L-glutamate + NH4(+). The catalysed reaction is L-asparagine + H2O = L-aspartate + NH4(+). This Pseudomonas aeruginosa (strain ATCC 15692 / DSM 22644 / CIP 104116 / JCM 14847 / LMG 12228 / 1C / PRS 101 / PAO1) protein is Glutaminase-asparaginase (ansB).